A 201-amino-acid polypeptide reads, in one-letter code: Small ribosomal subunit protein uS4 (201 aa).

Residues 1 to 45 form a disordered region; sequence MARYTGPLTKKSRRLGTDLVGNDKSFERRPYPPGVHGRGRTKDSE. Residues 91–157 enclose the S4 RNA-binding domain; the sequence is SRLDNVVYRA…PPIVIARETF (67 aa).

This sequence belongs to the universal ribosomal protein uS4 family. In terms of assembly, part of the 30S ribosomal subunit. Contacts protein S5. The interaction surface between S4 and S5 is involved in control of translational fidelity.

Functionally, one of the primary rRNA binding proteins, it binds directly to 16S rRNA where it nucleates assembly of the body of the 30S subunit. In terms of biological role, with S5 and S12 plays an important role in translational accuracy. The polypeptide is Small ribosomal subunit protein uS4 (Cutibacterium acnes (strain DSM 16379 / KPA171202) (Propionibacterium acnes)).